Reading from the N-terminus, the 475-residue chain is Glutamate--tRNA ligase 2 (475 aa).

The short motif at 9 to 19 is the 'HIGH' region element; the sequence is PSPTGFLHIGS. The short motif at 238-242 is the 'KMSKS' region element; the sequence is KLSKR. Lysine 241 provides a ligand contact to ATP.

This sequence belongs to the class-I aminoacyl-tRNA synthetase family. Glutamate--tRNA ligase type 1 subfamily. As to quaternary structure, monomer.

It localises to the cytoplasm. It carries out the reaction tRNA(Glu) + L-glutamate + ATP = L-glutamyl-tRNA(Glu) + AMP + diphosphate. Its function is as follows. Catalyzes the attachment of glutamate to tRNA(Glu) in a two-step reaction: glutamate is first activated by ATP to form Glu-AMP and then transferred to the acceptor end of tRNA(Glu). The polypeptide is Glutamate--tRNA ligase 2 (Bartonella quintana (strain Toulouse) (Rochalimaea quintana)).